A 283-amino-acid polypeptide reads, in one-letter code: Isochorismatase domain-containing protein 1 (283 aa).

It belongs to the isochorismatase family.

This Danio rerio (Zebrafish) protein is Isochorismatase domain-containing protein 1 (isoc1).